The primary structure comprises 193 residues: Ribonuclease HII (193 aa).

Residues 15-193 form the RNase H type-2 domain; that stretch reads YIVAGIDEAG…PYHRKSFKCC (179 aa). The a divalent metal cation site is built by D21, E22, and D112.

The protein belongs to the RNase HII family. Mn(2+) is required as a cofactor. The cofactor is Mg(2+).

Its subcellular location is the cytoplasm. The catalysed reaction is Endonucleolytic cleavage to 5'-phosphomonoester.. Its function is as follows. Endonuclease that specifically degrades the RNA of RNA-DNA hybrids. The polypeptide is Ribonuclease HII (Rickettsia akari (strain Hartford)).